The following is a 164-amino-acid chain: Phosphopantetheine adenylyltransferase (164 aa).

Ser9 contacts substrate. Residues 9–10 (SF) and His17 each bind ATP. 3 residues coordinate substrate: Lys41, Val78, and Arg92. ATP is bound by residues 93 to 95 (GLR), Glu103, and 128 to 134 (VRTITAT).

The protein belongs to the bacterial CoaD family. In terms of assembly, homohexamer. Mg(2+) is required as a cofactor.

The protein resides in the cytoplasm. It carries out the reaction (R)-4'-phosphopantetheine + ATP + H(+) = 3'-dephospho-CoA + diphosphate. It participates in cofactor biosynthesis; coenzyme A biosynthesis; CoA from (R)-pantothenate: step 4/5. Its function is as follows. Reversibly transfers an adenylyl group from ATP to 4'-phosphopantetheine, yielding dephospho-CoA (dPCoA) and pyrophosphate. In Brucella abortus (strain 2308), this protein is Phosphopantetheine adenylyltransferase.